The primary structure comprises 191 residues: Ribonuclease M5 1 (191 aa).

In terms of domain architecture, Toprim spans 10–93 (KEVIVVEGKD…AFLTKHDAAP (84 aa)). The Mg(2+) site is built by Glu16, Asp62, and Asp64.

Belongs to the ribonuclease M5 family. Requires Mg(2+) as cofactor.

The protein localises to the cytoplasm. It catalyses the reaction Endonucleolytic cleavage of RNA, removing 21 and 42 nucleotides, respectively, from the 5'- and 3'-termini of a 5S-rRNA precursor.. Functionally, required for correct processing of both the 5' and 3' ends of 5S rRNA precursor. Cleaves both sides of a double-stranded region yielding mature 5S rRNA in one step. The sequence is that of Ribonuclease M5 1 from Ligilactobacillus salivarius (strain CECT 5713) (Lactobacillus salivarius).